Reading from the N-terminus, the 655-residue chain is Threonine--tRNA ligase (655 aa).

Residues 1–66 enclose the TGS domain; sequence MIDLVFPDGS…TGERKFEILT (66 aa). The tract at residues 248-540 is catalytic; it reads DHRKLGKTMD…LLENFAGALP (293 aa). Residues C340, H391, and H517 each coordinate Zn(2+).

It belongs to the class-II aminoacyl-tRNA synthetase family. Homodimer. Requires Zn(2+) as cofactor.

It is found in the cytoplasm. It catalyses the reaction tRNA(Thr) + L-threonine + ATP = L-threonyl-tRNA(Thr) + AMP + diphosphate + H(+). In terms of biological role, catalyzes the attachment of threonine to tRNA(Thr) in a two-step reaction: L-threonine is first activated by ATP to form Thr-AMP and then transferred to the acceptor end of tRNA(Thr). Also edits incorrectly charged L-seryl-tRNA(Thr). This Caulobacter vibrioides (strain ATCC 19089 / CIP 103742 / CB 15) (Caulobacter crescentus) protein is Threonine--tRNA ligase.